The chain runs to 410 residues: MSSGALFPSLVSGSRSSSSKYLVEFRAGKMTLKGSTVTPDKRKGTVYIQQTDDSLIHFCWKDRTSGNVEDDLIIFPDDCEFKRVNQCTTGRVYVLKFKAGSKRLFFWMQEPKTDKDDEYCRKVNEYLNNPPMPGALGSGGGGGHELSALGEGGLQSLLGNMSHNQLMQLIGPTGLGGLGALAGPGLASLLGSGGPATSSSTSSSRSQSAAATPSSGSAARLSSTQAPTTPVTPAATSSGSPTVTPTTPAAQTPSLPAGPASSTQPIQLSDLQSILATMNVPAMPTEGSGVDLASVLTPDVMAPILANPEVQQRLLPYLPSGESLPQSAEEIQNTLTSPQFQQAMSMFSSALASGQLGPLMNQFGLPSEAVDAANKGDVEAFAKAMEGSDSKTDDGDSKDKKDDDEDMSLD.

One can recognise a Pru domain in the interval 17 to 130; that stretch reads SSSKYLVEFR…RKVNEYLNNP (114 aa). The residue at position 18 (Ser-18) is a Phosphoserine. Positions 191 to 257 are enriched in low complexity; that stretch reads GSGGPATSSS…PAAQTPSLPA (67 aa). Disordered regions lie at residues 191 to 264 and 381 to 410; these read GSGG…SSTQ and FAKAMEGSDSKTDDGDSKDKKDDDEDMSLD. The 115-residue stretch at 281–395 folds into the DEUBAD domain; that stretch reads PAMPTEGSGV…EGSDSKTDDG (115 aa). A compositionally biased stretch (basic and acidic residues) spans 381–401; sequence FAKAMEGSDSKTDDGDSKDKK.

Belongs to the ADRM1 family. Component of the 19S proteasome regulatory particle complex. The 26S proteasome consists of a 20S core particle (CP) and two 19S regulatory subunits (RP).

Its subcellular location is the cytoplasm. It localises to the nucleus. Its function is as follows. Component of the 26S proteasome, a multiprotein complex involved in the ATP-dependent degradation of ubiquitinated proteins. This complex plays a key role in the maintenance of protein homeostasis by removing misfolded or damaged proteins, which could impair cellular functions, and by removing proteins whose functions are no longer required. Therefore, the proteasome participates in numerous cellular processes, including cell cycle progression, apoptosis, or DNA damage repair. Within the complex, functions as a proteasomal ubiquitin receptor. In Danio rerio (Zebrafish), this protein is Proteasomal ubiquitin receptor ADRM1 (adrm1b).